A 101-amino-acid chain; its full sequence is Protein Tat (101 aa).

The tract at residues 1–24 (MDPVDPKLEPWNHPGSQPTTPCNK) is interaction with human CREBBP. Residues 1-48 (MDPVDPKLEPWNHPGSQPTTPCNKCYCKVCCWHCQVCFLNKGLGISYG) are transactivation. Zn(2+) contacts are provided by Cys-22, Cys-25, and Cys-27. The cysteine-rich stretch occupies residues 22–37 (CNKCYCKVCCWHCQVC). At Lys-28 the chain carries N6-acetyllysine; by host PCAF. Residues Cys-30, His-33, Cys-34, and Cys-37 each coordinate Zn(2+). Residues 38 to 48 (FLNKGLGISYG) form a core region. Residues 48–101 (GRKKRRPRRGTPQGSKDHQNPVPKQPLPITSGNPTGSEKPKKEVASKTETDPLD) are disordered. Positions 49 to 57 (RKKRRPRRG) match the Nuclear localization signal, RNA-binding (TAR), and protein transduction motif. The interaction with the host capping enzyme RNGTT stretch occupies residues 49-86 (RKKRRPRRGTPQGSKDHQNPVPKQPLPITSGNPTGSEK). An N6-acetyllysine; by host EP300 and GCN5L2 mark is found at Lys-50 and Lys-51. Arg-52 and Arg-53 each carry asymmetric dimethylarginine; by host PRMT6. A Glycyl lysine isopeptide (Lys-Gly) (interchain with G-Cter in ubiquitin) cross-link involves residue Lys-71. Basic and acidic residues predominate over residues 85–101 (EKPKKEVASKTETDPLD).

This sequence belongs to the lentiviruses Tat family. As to quaternary structure, interacts with host CCNT1. Associates with the P-TEFb complex composed at least of Tat, P-TEFb (CDK9 and CCNT1), TAR RNA, RNA Pol II. Recruits the HATs CREBBP, TAF1/TFIID, EP300, PCAF and GCN5L2. Interacts with host KAT5/Tip60; this interaction targets the latter to degradation. Interacts with the host deacetylase SIRT1. Interacts with host capping enzyme RNGTT; this interaction stimulates RNGTT. Binds to host KDR, and to the host integrins ITGAV/ITGB3 and ITGA5/ITGB1. Interacts with host KPNB1/importin beta-1 without previous binding to KPNA1/importin alpha-1. Interacts with EIF2AK2. Interacts with host nucleosome assembly protein NAP1L1; this interaction may be required for the transport of Tat within the nucleus, since the two proteins interact at the nuclear rim. Interacts with host C1QBP/SF2P32; this interaction involves lysine-acetylated Tat. Interacts with the host chemokine receptors CCR2, CCR3 and CXCR4. Interacts with host DPP4/CD26; this interaction may trigger an anti-proliferative effect. Interacts with host LDLR. Interacts with the host extracellular matrix metalloproteinase MMP1. Interacts with host PRMT6; this interaction mediates Tat's methylation. Interacts with, and is ubiquitinated by MDM2/Hdm2. Interacts with host PSMC3 and HTATIP2. Interacts with STAB1; this interaction may overcome SATB1-mediated repression of IL2 and IL2RA (interleukin) in T cells by binding to the same domain than HDAC1. Interacts (when acetylated) with human CDK13, thereby increasing HIV-1 mRNA splicing and promoting the production of the doubly spliced HIV-1 protein Nef. Interacts with host TBP; this interaction modulates the activity of transcriptional pre-initiation complex. Interacts with host RELA. Interacts with host PLSCR1; this interaction negatively regulates Tat transactivation activity by altering its subcellular distribution. Asymmetrical arginine methylation by host PRMT6 seems to diminish the transactivation capacity of Tat and affects the interaction with host CCNT1. Post-translationally, acetylation by EP300, CREBBP, GCN5L2/GCN5 and PCAF regulates the transactivation activity of Tat. EP300-mediated acetylation of Lys-50 promotes dissociation of Tat from the TAR RNA through the competitive binding to PCAF's bromodomain. In addition, the non-acetylated Tat's N-terminus can also interact with PCAF. PCAF-mediated acetylation of Lys-28 enhances Tat's binding to CCNT1. Lys-50 is deacetylated by SIRT1. In terms of processing, polyubiquitination by host MDM2 does not target Tat to degradation, but activates its transactivation function and fosters interaction with CCNT1 and TAR RNA. Phosphorylated by EIF2AK2 on serine and threonine residues adjacent to the basic region important for TAR RNA binding and function. Phosphorylation of Tat by EIF2AK2 is dependent on the prior activation of EIF2AK2 by dsRNA.

The protein resides in the host nucleus. Its subcellular location is the host nucleolus. It is found in the host cytoplasm. The protein localises to the secreted. Its function is as follows. Transcriptional activator that increases RNA Pol II processivity, thereby increasing the level of full-length viral transcripts. Recognizes a hairpin structure at the 5'-LTR of the nascent viral mRNAs referred to as the transactivation responsive RNA element (TAR) and recruits the cyclin T1-CDK9 complex (P-TEFb complex) that will in turn hyperphosphorylate the RNA polymerase II to allow efficient elongation. The CDK9 component of P-TEFb and other Tat-activated kinases hyperphosphorylate the C-terminus of RNA Pol II that becomes stabilized and much more processive. Other factors such as HTATSF1/Tat-SF1, SUPT5H/SPT5, and HTATIP2 are also important for Tat's function. Besides its effect on RNA Pol II processivity, Tat induces chromatin remodeling of proviral genes by recruiting the histone acetyltransferases (HATs) CREBBP, EP300 and PCAF to the chromatin. This also contributes to the increase in proviral transcription rate, especially when the provirus integrates in transcriptionally silent region of the host genome. To ensure maximal activation of the LTR, Tat mediates nuclear translocation of NF-kappa-B by interacting with host RELA. Through its interaction with host TBP, Tat may also modulate transcription initiation. Tat can reactivate a latently infected cell by penetrating in it and transactivating its LTR promoter. In the cytoplasm, Tat is thought to act as a translational activator of HIV-1 mRNAs. In terms of biological role, extracellular circulating Tat can be endocytosed by surrounding uninfected cells via the binding to several surface receptors such as CD26, CXCR4, heparan sulfate proteoglycans (HSPG) or LDLR. Neurons are rarely infected, but they internalize Tat via their LDLR. Through its interaction with nuclear HATs, Tat is potentially able to control the acetylation-dependent cellular gene expression. Modulates the expression of many cellular genes involved in cell survival, proliferation or in coding for cytokines or cytokine receptors. Tat plays a role in T-cell and neurons apoptosis. Tat induced neurotoxicity and apoptosis probably contribute to neuroAIDS. Circulating Tat also acts as a chemokine-like and/or growth factor-like molecule that binds to specific receptors on the surface of the cells, affecting many cellular pathways. In the vascular system, Tat binds to ITGAV/ITGB3 and ITGA5/ITGB1 integrins dimers at the surface of endothelial cells and competes with bFGF for heparin-binding sites, leading to an excess of soluble bFGF. The sequence is that of Protein Tat from Homo sapiens (Human).